The primary structure comprises 171 residues: Small ribosomal subunit protein uS13 (171 aa).

Residues Met-1–Val-11 show a composition bias toward polar residues. Disordered regions lie at residues Met-1 to Glu-24 and Glu-144 to Ile-164. A compositionally biased stretch (basic residues) spans Glu-144 to Gly-158.

It belongs to the universal ribosomal protein uS13 family. As to quaternary structure, part of the 30S ribosomal subunit. Forms a loose heterodimer with protein S19. Forms two bridges to the 50S subunit in the 70S ribosome.

Functionally, located at the top of the head of the 30S subunit, it contacts several helices of the 16S rRNA. In the 70S ribosome it contacts the 23S rRNA (bridge B1a) and protein L5 of the 50S subunit (bridge B1b), connecting the 2 subunits; these bridges are implicated in subunit movement. The protein is Small ribosomal subunit protein uS13 of Thermoplasma acidophilum (strain ATCC 25905 / DSM 1728 / JCM 9062 / NBRC 15155 / AMRC-C165).